The sequence spans 156 residues: Small ribosomal subunit protein uS7 (156 aa).

Belongs to the universal ribosomal protein uS7 family. In terms of assembly, part of the 30S ribosomal subunit. Contacts proteins S9 and S11.

Its function is as follows. One of the primary rRNA binding proteins, it binds directly to 16S rRNA where it nucleates assembly of the head domain of the 30S subunit. Is located at the subunit interface close to the decoding center, probably blocks exit of the E-site tRNA. The polypeptide is Small ribosomal subunit protein uS7 (Shewanella baltica (strain OS223)).